We begin with the raw amino-acid sequence, 80 residues long: Putative membrane protein insertion efficiency factor (80 aa).

Belongs to the UPF0161 family.

Its subcellular location is the cell inner membrane. In terms of biological role, could be involved in insertion of integral membrane proteins into the membrane. The polypeptide is Putative membrane protein insertion efficiency factor (Syntrophobacter fumaroxidans (strain DSM 10017 / MPOB)).